We begin with the raw amino-acid sequence, 255 residues long: H-2 class II histocompatibility antigen, E-U alpha chain (255 aa).

Positions 1–25 are cleaved as a signal peptide; that stretch reads MATIGALLLRFFFIAVLMSSQKSWA. The tract at residues 26–109 is alpha-1; sequence IKEEHTIIQA…KRSNNTPDAN (84 aa). Topologically, residues 26–217 are extracellular; that stretch reads IKEEHTIIQA…KTLLPETKEN (192 aa). The interval 110–203 is alpha-2; sequence VAPEVTVLSR…GLEEPLRKHW (94 aa). Residues 112 to 204 form the Ig-like C1-type domain; sequence PEVTVLSRSP…LEEPLRKHWE (93 aa). Cysteines 132 and 188 form a disulfide. N-linked (GlcNAc...) asparagine glycosylation is present at Asn-143. The interval 204–216 is connecting peptide; it reads EFEEKTLLPETKE. Residues 218 to 238 form a helical membrane-spanning segment; it reads VVCALGLFVGLVGIVVGIILI. Over 239–255 the chain is Cytoplasmic; that stretch reads MKGIKKRNVVERRQGAL.

This sequence belongs to the MHC class II family.

The protein resides in the membrane. The polypeptide is H-2 class II histocompatibility antigen, E-U alpha chain (H2-Ea) (Mus musculus (Mouse)).